The chain runs to 798 residues: Penicillin-binding protein 1A (798 aa).

Residues 1 to 9 (MIKKIMTTC) are Cytoplasmic-facing. A helical; Signal-anchor for type II membrane protein transmembrane segment spans residues 10–30 (FGLVFGLCVFAVGLLAIAILA). The Periplasmic segment spans residues 31 to 798 (TYPKLPSLDS…SKRQQLDSLF (768 aa)). Residues 50–218 (LTVYSADGKI…SAYNPIVNPE (169 aa)) are transglycosylase. E88 functions as the Proton donor; for transglycosylase activity in the catalytic mechanism. A transpeptidase region spans residues 378 to 700 (RRALGFAARA…GTIAVPVWVD (323 aa)). S461 serves as the catalytic Acyl-ester intermediate; for transpeptidase activity. The disordered stretch occupies residues 739 to 798 (LMLDNGGAAPQPSRRVKEDDGGAAEGGRQEADDESRQDMQETPVLPSNTDSKRQQLDSLF). Composition is skewed to basic and acidic residues over residues 765–777 (GRQE…RQDM) and 788–798 (DSKRQQLDSLF).

In the N-terminal section; belongs to the glycosyltransferase 51 family. It in the C-terminal section; belongs to the transpeptidase family.

The protein resides in the cell inner membrane. The catalysed reaction is [GlcNAc-(1-&gt;4)-Mur2Ac(oyl-L-Ala-gamma-D-Glu-L-Lys-D-Ala-D-Ala)](n)-di-trans,octa-cis-undecaprenyl diphosphate + beta-D-GlcNAc-(1-&gt;4)-Mur2Ac(oyl-L-Ala-gamma-D-Glu-L-Lys-D-Ala-D-Ala)-di-trans,octa-cis-undecaprenyl diphosphate = [GlcNAc-(1-&gt;4)-Mur2Ac(oyl-L-Ala-gamma-D-Glu-L-Lys-D-Ala-D-Ala)](n+1)-di-trans,octa-cis-undecaprenyl diphosphate + di-trans,octa-cis-undecaprenyl diphosphate + H(+). The enzyme catalyses Preferential cleavage: (Ac)2-L-Lys-D-Ala-|-D-Ala. Also transpeptidation of peptidyl-alanyl moieties that are N-acyl substituents of D-alanine.. It participates in cell wall biogenesis; peptidoglycan biosynthesis. In terms of biological role, cell wall formation. Synthesis of cross-linked peptidoglycan from the lipid intermediates. The enzyme has a penicillin-insensitive transglycosylase N-terminal domain (formation of linear glycan strands) and a penicillin-sensitive transpeptidase C-terminal domain (cross-linking of the peptide subunits). In Neisseria lactamica, this protein is Penicillin-binding protein 1A (mrcA).